We begin with the raw amino-acid sequence, 402 residues long: FMN-dependent alpha-hydroxy acid dehydrogenase qulF (402 aa).

Residues Arg22–Tyr394 enclose the FMN hydroxy acid dehydrogenase domain. Tyr48 is an a 2-oxocarboxylate binding site. FMN is bound by residues Ser130 and Gln152. Residues Tyr154 and Arg189 each coordinate a 2-oxocarboxylate. Residue Lys265 participates in FMN binding. His289 functions as the Proton acceptor in the catalytic mechanism. Arg292 provides a ligand contact to a 2-oxocarboxylate. FMN contacts are provided by residues Asp320–Arg324 and Gly343–Arg344.

This sequence belongs to the FMN-dependent alpha-hydroxy acid dehydrogenase family. FMN is required as a cofactor.

FMN-dependent alpha-hydroxy acid dehydrogenase; part of the gene cluster that mediates the biosynthesis of quinolactacin A2 (QUL A2), a fungal alkaloid that features a quinolone-gamma-lactam hybrid, which is a potential pharmacophore for the treatment of cancer and Alzheimer's disease. The quinolone-gamma-lactam hybrid scaffold is synthesized from the combination of L-isoleucine (L-Ile) and the nonproteinogenic amino acid L-kynurenine, followed by quinolone cyclization, oxidative decarboxylation, and lactam formation. Additionally, the N-methyl group is derived from methionine, which might be catalyzed by an S-adenosylmethionine (SAM)-dependent methyltransferase. Bioconversion of L-tryptophan to L-kynurenine could be catalyzed by the indoleamine-2,3-dioxygenase (IDO) qulI to produce an unstable product, N-formyl-L-kynurenine, followed by kynurenine formamidase catalyzed hydrolysis. QulM then acts as a methyltransferase that methylates L-kynurenine at the N-4 position. The FMN-dependent alpha-hydroxy acid dehydrogenase qulF than functions as an oxidative decarboxylase which converts N-methylkynurenine into 2-aminobenzoylacetamide via 2 tandem reactions, including dehydrogenation and decarboxylation. An amidase located outside of the qul gene cluster further produces the unstable beta-keto acid precursor N-methyl-2-aminobenzoylacetate, which could be spontaneously dehydrated to form N-methyl-4-hydroxy-2-quinolone. The NRPS qulB is able to incorporate N-methyl-2-aminobenzoylacetate and efficiently compete with the spontaneous reaction. By further extending the beta-keto acid with L-Ile, qulA performs a Dieckmann condensation to form the gamma-lactam ring and release a 4-ketopyrrolidinone intermediate from the assembly line. This intermediate could plausibly further undergo a spontaneous cyclization to yield the final quinolone-gamma-lactam hybrid structure. The polypeptide is FMN-dependent alpha-hydroxy acid dehydrogenase qulF (Penicillium citrinum).